The following is a 290-amino-acid chain: UPF0507 protein YML003W (290 aa).

Belongs to the UPF0507 family.

The protein is UPF0507 protein YML003W of Saccharomyces cerevisiae (strain ATCC 204508 / S288c) (Baker's yeast).